Here is a 230-residue protein sequence, read N- to C-terminus: Antiholin-like protein LrgB (230 aa).

7 helical membrane-spanning segments follow: residues Met5–Phe25, Gly30–Val50, Gly61–Tyr81, Trp92–Val112, Ile149–Leu169, Pro177–Ile197, and Ile209–Ile229.

The protein belongs to the CidB/LrgB family. LrgB subfamily.

Its subcellular location is the cell membrane. Functionally, inhibits the expression or activity of extracellular murein hydrolases by interacting, possibly with LrgA, with the holin-like protein CidA. The LrgAB and CidA proteins may affect the proton motive force of the membrane. May be involved in programmed cell death (PCD), possibly triggering PCD in response to antibiotics and environmental stresses. The sequence is that of Antiholin-like protein LrgB from Bacillus cereus (strain Q1).